The chain runs to 362 residues: Mannose-1-phosphate guanyltransferase (362 aa).

It belongs to the transferase hexapeptide repeat family.

The protein resides in the cytoplasm. It catalyses the reaction alpha-D-mannose 1-phosphate + GTP + H(+) = GDP-alpha-D-mannose + diphosphate. The protein operates within nucleotide-sugar biosynthesis; GDP-alpha-D-mannose biosynthesis; GDP-alpha-D-mannose from alpha-D-mannose 1-phosphate (GTP route): step 1/1. Functionally, involved in cell wall synthesis where it is required for glycosylation. Involved in cell cycle progression through cell-size checkpoint. The polypeptide is Mannose-1-phosphate guanyltransferase (MPG1) (Candida albicans (strain SC5314 / ATCC MYA-2876) (Yeast)).